A 423-amino-acid chain; its full sequence is Putative gustatory receptor 97a (423 aa).

Over 1-31 (MRFLRRQTRRLRSIWQRSLPVRFRRGKLHTQ) the chain is Cytoplasmic. Residues 32–52 (LVTICLYATVFLNILYGVYLG) traverse the membrane as a helical segment. Topologically, residues 53-65 (RFSFRRKKFVFSK) are extracellular. A helical membrane pass occupies residues 66 to 86 (GLTIYSLFVATFFALFYIWNI). Topologically, residues 87 to 99 (YNEISTGQINLRD) are cytoplasmic. A helical transmembrane segment spans residues 100–120 (TIGIYCYMNVCVCLFNYVTQW). The Extracellular segment spans residues 121 to 152 (EKTLQIIRFQNSVPLFKVLDSLDISAMIVWRA). Residues 153–173 (FIYGLLKIVFCPLITYITLIL) traverse the membrane as a helical segment. Residues 174–200 (YHRRSISESQWTSVTTTKTMLPLIVSN) are Cytoplasmic-facing. The helical transmembrane segment at 201–221 (QINNCFFGGLVLANLIFAAVN) threads the bilayer. The Extracellular segment spans residues 222–278 (RKLHGIVKEANMLQSPVQMNLHKPYYRMRRFCELADLLDELARKYGFTASRSKNYLR). The helical transmembrane segment at 279-299 (FTDWSMVLSMLMNLLGITMGC) threads the bilayer. At 300-317 (YNQYLAIADHYINEEPFD) the chain is on the cytoplasmic side. A helical membrane pass occupies residues 318–338 (LFLAIVLVVFLAVPFLELVMV). Residues 339–423 (ARISNQTLTR…SDLTLRFSLK (85 aa)) lie on the Extracellular side of the membrane. 2 N-linked (GlcNAc...) asparagine glycosylation sites follow: Asn343 and Asn393.

This sequence belongs to the insect chemoreceptor superfamily. Gustatory receptor (GR) family. Gr22e subfamily. As to expression, in larvae, is expressed in neurons of the terminal external chemosensory organ.

Its subcellular location is the cell membrane. Probable gustatory receptor which mediates acceptance or avoidance behavior, depending on its substrates. This is Putative gustatory receptor 97a (Gr97a) from Drosophila melanogaster (Fruit fly).